A 437-amino-acid polypeptide reads, in one-letter code: Vacuolar protein sorting-associated protein 4A (437 aa).

An interaction with CHMP1B region spans residues 1–84 (MTTSTLQKAI…RSKEKHGKKP (84 aa)). One can recognise an MIT domain in the interval 2–80 (TTSTLQKAID…KDYLRSKEKH (79 aa)). Lysine 8 is modified (N6-acetyllysine). A disordered region spans residues 75-106 (RSKEKHGKKPVKENQSEGKGSDSDSEGDNPEK). Basic and acidic residues predominate over residues 84–96 (PVKENQSEGKGSD). Residues serine 95 and serine 97 each carry the phosphoserine modification. 167-174 (GPPGTGKS) lines the ATP pocket.

The protein belongs to the AAA ATPase family. In terms of assembly, proposed to be monomeric or homodimeric in nucleotide-free form and to oligomerize upon binding to ATP to form two stacked hexameric or heptameric rings with a central pore through which ESCRT-III substrates are translocated in an ATP-dependent manner. Interacts with CHMP1A, CHMP1B, CHMP2A, CHMP2B, CHMP3, CHMP4A, CHMP4B, CHMP4C and CHMP6. Interacts with VPS4B; the interaction suggests a heteromeric assembly with VPS4B. Interacts with SPAST. Interacts with IST1. Interacts with ZFYVE19/ANCHR; leading to retain it at midbody. Ubiquitously expressed.

It is found in the late endosome membrane. It localises to the midbody. Its subcellular location is the cytoplasm. The protein localises to the cytoskeleton. The protein resides in the spindle. It catalyses the reaction ATP + H2O = ADP + phosphate + H(+). Its function is as follows. Involved in late steps of the endosomal multivesicular bodies (MVB) pathway. Recognizes membrane-associated ESCRT-III assemblies and catalyzes their disassembly, possibly in combination with membrane fission. Redistributes the ESCRT-III components to the cytoplasm for further rounds of MVB sorting. MVBs contain intraluminal vesicles (ILVs) that are generated by invagination and scission from the limiting membrane of the endosome and mostly are delivered to lysosomes enabling degradation of membrane proteins, such as stimulated growth factor receptors, lysosomal enzymes and lipids. It is required for proper accomplishment of various processes including the regulation of endosome size, primary cilium organization, mitotic spindle organization, chromosome segregation, and nuclear envelope sealing and spindle disassembly during anaphase. Involved in cytokinesis: retained at the midbody by ZFYVE19/ANCHR and CHMP4C until abscission checkpoint signaling is terminated at late cytokinesis. It is then released following dephosphorylation of CHMP4C, leading to abscission. VPS4A/B are required for the exosomal release of SDCBP, CD63 and syndecan. Critical for normal erythroblast cytokinesis and correct erythropoiesis. In terms of biological role, (Microbial infection) In conjunction with the ESCRT machinery also appears to function in topologically equivalent membrane fission events, such as the terminal stages of cytokinesis and enveloped virus budding (HIV-1 and other lentiviruses). The protein is Vacuolar protein sorting-associated protein 4A of Homo sapiens (Human).